The following is a 375-amino-acid chain: tRNA-specific 2-thiouridylase MnmA (375 aa).

Residues 12-19 (GMSGGVDS) and methionine 38 each bind ATP. The interval 98–100 (NPD) is interaction with target base in tRNA. The active-site Nucleophile is the cysteine 103. Cysteine 103 and cysteine 200 are oxidised to a cystine. Position 127 (glycine 127) interacts with ATP. The tract at residues 150 to 152 (KDQ) is interaction with tRNA. Cysteine 200 functions as the Cysteine persulfide intermediate in the catalytic mechanism. The interaction with tRNA stretch occupies residues 312 to 313 (RY).

This sequence belongs to the MnmA/TRMU family.

The protein localises to the cytoplasm. The enzyme catalyses S-sulfanyl-L-cysteinyl-[protein] + uridine(34) in tRNA + AH2 + ATP = 2-thiouridine(34) in tRNA + L-cysteinyl-[protein] + A + AMP + diphosphate + H(+). Catalyzes the 2-thiolation of uridine at the wobble position (U34) of tRNA, leading to the formation of s(2)U34. This chain is tRNA-specific 2-thiouridylase MnmA, found in Lactobacillus gasseri (strain ATCC 33323 / DSM 20243 / BCRC 14619 / CIP 102991 / JCM 1131 / KCTC 3163 / NCIMB 11718 / NCTC 13722 / AM63).